A 360-amino-acid polypeptide reads, in one-letter code: Phospho-N-acetylmuramoyl-pentapeptide-transferase (360 aa).

The next 10 helical transmembrane spans lie at 25-45 (RGIL…PWLI), 74-94 (MGGA…ADLA), 97-117 (YVWV…VDDY), 132-152 (WKYF…YMTA), 168-188 (IEIP…VGSS), 199-219 (GLAI…CYLS), 236-256 (SGEL…FLWF), 263-283 (VFMG…IAVI), 288-308 (VVLF…MIQV), and 338-358 (VIVR…ATLK).

Belongs to the glycosyltransferase 4 family. MraY subfamily. It depends on Mg(2+) as a cofactor.

The protein resides in the cell inner membrane. The enzyme catalyses UDP-N-acetyl-alpha-D-muramoyl-L-alanyl-gamma-D-glutamyl-meso-2,6-diaminopimeloyl-D-alanyl-D-alanine + di-trans,octa-cis-undecaprenyl phosphate = di-trans,octa-cis-undecaprenyl diphospho-N-acetyl-alpha-D-muramoyl-L-alanyl-D-glutamyl-meso-2,6-diaminopimeloyl-D-alanyl-D-alanine + UMP. It functions in the pathway cell wall biogenesis; peptidoglycan biosynthesis. Its function is as follows. Catalyzes the initial step of the lipid cycle reactions in the biosynthesis of the cell wall peptidoglycan: transfers peptidoglycan precursor phospho-MurNAc-pentapeptide from UDP-MurNAc-pentapeptide onto the lipid carrier undecaprenyl phosphate, yielding undecaprenyl-pyrophosphoryl-MurNAc-pentapeptide, known as lipid I. The protein is Phospho-N-acetylmuramoyl-pentapeptide-transferase of Stutzerimonas stutzeri (strain A1501) (Pseudomonas stutzeri).